The chain runs to 703 residues: Elongation factor G 1 (703 aa).

Residues 8–290 (ERYRNIGISA…AVIDFLPSPV (283 aa)) enclose the tr-type G domain. GTP-binding positions include 17–24 (AHIDAGKT), 88–92 (DTPGH), and 142–145 (NKMD).

Belongs to the TRAFAC class translation factor GTPase superfamily. Classic translation factor GTPase family. EF-G/EF-2 subfamily.

The protein localises to the cytoplasm. Catalyzes the GTP-dependent ribosomal translocation step during translation elongation. During this step, the ribosome changes from the pre-translocational (PRE) to the post-translocational (POST) state as the newly formed A-site-bound peptidyl-tRNA and P-site-bound deacylated tRNA move to the P and E sites, respectively. Catalyzes the coordinated movement of the two tRNA molecules, the mRNA and conformational changes in the ribosome. The sequence is that of Elongation factor G 1 from Ralstonia nicotianae (strain ATCC BAA-1114 / GMI1000) (Ralstonia solanacearum).